Reading from the N-terminus, the 87-residue chain is Small ribosomal subunit protein bS20 (87 aa).

Positions 1–22 are disordered; sequence MANTSQARKRARQAGVRRVRNA. The span at 7-20 shows a compositional bias: basic residues; sequence ARKRARQAGVRRVR.

This sequence belongs to the bacterial ribosomal protein bS20 family.

Binds directly to 16S ribosomal RNA. This Nitrosococcus oceani (strain ATCC 19707 / BCRC 17464 / JCM 30415 / NCIMB 11848 / C-107) protein is Small ribosomal subunit protein bS20.